We begin with the raw amino-acid sequence, 313 residues long: Probable cell division protein WhiA (313 aa).

The H-T-H motif DNA-binding region spans 276 to 309; it reads SLKELGEMLHPKLGKSGVNHRLRKLDEIAERIRK.

It belongs to the WhiA family.

Its function is as follows. Involved in cell division and chromosome segregation. The sequence is that of Probable cell division protein WhiA from Ruminiclostridium cellulolyticum (strain ATCC 35319 / DSM 5812 / JCM 6584 / H10) (Clostridium cellulolyticum).